A 305-amino-acid chain; its full sequence is MENKYTHGVLFYHEHSGLKNINQGIGEVTTALSSICKHLSIQLSENEGDIIKYCQEIKAKDYAKDVDILFILGGDGTVNELINGVMTHDLQLPIGILPGGTFNDFTKTLNIAPNHKQASEQMISAQVGTYDVIKINNQYALNFVGLGLIVQNAENVQDGSKDIFGKLSYIGSTVKTLLNPTQFNYQLSIDDKTYSGETTMILSANGPFIGGSRIPLTDLSPQDGELNTFIFNEQSFSILNDIFKKRDSMNWNEITQGIEHIPGKKISLTTDPTMKVDIDGEISLETPIDIEVIPNAIQLLTVNDL.

The DAGKc domain maps to N3–Y139. ATP is bound by residues S44, G74 to E80, and T101. 3 residues coordinate Mg(2+): S220, D223, and E225. E281 (proton acceptor) is an active-site residue.

This sequence belongs to the diacylglycerol/lipid kinase family. Mg(2+) serves as cofactor.

May catalyze the ATP-dependent phosphorylation of lipids other than diacylglycerol (DAG). In fact, is not able to exhibit diacylglycerol kinase activity in vitro. The polypeptide is Putative lipid kinase SAR0780 (Staphylococcus aureus (strain MRSA252)).